Reading from the N-terminus, the 560-residue chain is Oxygen-dependent choline dehydrogenase (560 aa).

Asp6–Glu35 contributes to the FAD binding site. The active-site Proton acceptor is His472.

The protein belongs to the GMC oxidoreductase family. The cofactor is FAD.

It carries out the reaction choline + A = betaine aldehyde + AH2. The enzyme catalyses betaine aldehyde + NAD(+) + H2O = glycine betaine + NADH + 2 H(+). It participates in amine and polyamine biosynthesis; betaine biosynthesis via choline pathway; betaine aldehyde from choline (cytochrome c reductase route): step 1/1. Involved in the biosynthesis of the osmoprotectant glycine betaine. Catalyzes the oxidation of choline to betaine aldehyde and betaine aldehyde to glycine betaine at the same rate. In Staphylococcus xylosus, this protein is Oxygen-dependent choline dehydrogenase.